A 1058-amino-acid chain; its full sequence is Protein argonaute MEL1 (1058 aa).

Composition is skewed to gly residues over residues 1-12 and 24-37; these read MAYRGGGRGGRG and DVPG…GGGA. 2 disordered regions span residues 1–77 and 115–147; these read MAYR…YGAP and RAPP…PSAT. Over residues 48–70 the composition is skewed to pro residues; that stretch reads WPPPGMTPRPGPPQPQYPRPGPP. The span at 121–147 shows a compositional bias: low complexity; the sequence is HSSAPAPYQPAAAAPAPSSSSTAPSAT. One can recognise a PAZ domain in the interval 407-520; sequence TVIQFVEEFL…LPMEVCKIVE (114 aa). One can recognise a Piwi domain in the interval 696-1016; it reads LLIVILPEVS…AAFRARYYVE (321 aa).

This sequence belongs to the argonaute family. Ago subfamily.

The protein resides in the nucleus. It localises to the nucleolus. Its function is as follows. Essential for the progression of premeiotic mitosis and meiosis during sporogenesis. Regulates the cell division of premeiotic germ cells, the proper modification of meiotic chromosomes, and the faithful progression of meiosis, probably via small RNA-mediated gene silencing. May be involved in histone H3 'Lys-9' demethylation in the pericentromeric region. This is Protein argonaute MEL1 (MEL1) from Oryza sativa subsp. japonica (Rice).